Here is a 389-residue protein sequence, read N- to C-terminus: Succinate--CoA ligase [ADP-forming] subunit beta (389 aa).

Positions 9-244 (KQLFAEYGLP…PSQEDEREAH (236 aa)) constitute an ATP-grasp domain. ATP contacts are provided by residues Lys46, 53-55 (GRG), Glu99, Thr102, and Glu107. Positions 199 and 213 each coordinate Mg(2+). Residues Asn264 and 321–323 (GIV) each bind substrate.

This sequence belongs to the succinate/malate CoA ligase beta subunit family. In terms of assembly, heterotetramer of two alpha and two beta subunits. Mg(2+) is required as a cofactor.

The enzyme catalyses succinate + ATP + CoA = succinyl-CoA + ADP + phosphate. It carries out the reaction GTP + succinate + CoA = succinyl-CoA + GDP + phosphate. It functions in the pathway carbohydrate metabolism; tricarboxylic acid cycle; succinate from succinyl-CoA (ligase route): step 1/1. Functionally, succinyl-CoA synthetase functions in the citric acid cycle (TCA), coupling the hydrolysis of succinyl-CoA to the synthesis of either ATP or GTP and thus represents the only step of substrate-level phosphorylation in the TCA. The beta subunit provides nucleotide specificity of the enzyme and binds the substrate succinate, while the binding sites for coenzyme A and phosphate are found in the alpha subunit. The protein is Succinate--CoA ligase [ADP-forming] subunit beta of Teredinibacter turnerae (strain ATCC 39867 / T7901).